Consider the following 368-residue polypeptide: Phosphate acyltransferase (368 aa).

It belongs to the PlsX family. In terms of assembly, homodimer. Probably interacts with PlsY.

The protein localises to the cytoplasm. The enzyme catalyses a fatty acyl-[ACP] + phosphate = an acyl phosphate + holo-[ACP]. Its pathway is lipid metabolism; phospholipid metabolism. In terms of biological role, catalyzes the reversible formation of acyl-phosphate (acyl-PO(4)) from acyl-[acyl-carrier-protein] (acyl-ACP). This enzyme utilizes acyl-ACP as fatty acyl donor, but not acyl-CoA. The protein is Phosphate acyltransferase of Herpetosiphon aurantiacus (strain ATCC 23779 / DSM 785 / 114-95).